The following is a 393-amino-acid chain: Pyrimidine monooxygenase RutA (393 aa).

Residues isoleucine 79–lysine 80, asparagine 145, glutamate 154, arginine 170–tyrosine 171, and serine 220 contribute to the FMN site.

The protein belongs to the NtaA/SnaA/DszA monooxygenase family. RutA subfamily.

The catalysed reaction is uracil + FMNH2 + NADH + O2 = (Z)-3-ureidoacrylate + FMN + NAD(+) + H2O + H(+). It carries out the reaction thymine + FMNH2 + NADH + O2 = (Z)-2-methylureidoacrylate + FMN + NAD(+) + H2O + H(+). Its function is as follows. Catalyzes the pyrimidine ring opening between N-3 and C-4 by an unusual flavin hydroperoxide-catalyzed mechanism, adding oxygen atoms in the process to yield ureidoacrylate peracid, that immediately reacts with FMN forming ureidoacrylate and FMN-N(5)-oxide. The FMN-N(5)-oxide reacts spontaneously with NADH to produce FMN. Requires the flavin reductase RutF to regenerate FMN in vivo. This chain is Pyrimidine monooxygenase RutA, found in Escherichia coli O18:K1:H7 (strain IHE3034 / ExPEC).